Here is a 94-residue protein sequence, read N- to C-terminus: Large ribosomal subunit protein bL25 (94 aa).

The protein belongs to the bacterial ribosomal protein bL25 family. As to quaternary structure, part of the 50S ribosomal subunit; part of the 5S rRNA/L5/L18/L25 subcomplex. Contacts the 5S rRNA. Binds to the 5S rRNA independently of L5 and L18.

This is one of the proteins that binds to the 5S RNA in the ribosome where it forms part of the central protuberance. The polypeptide is Large ribosomal subunit protein bL25 (Shigella boydii serotype 18 (strain CDC 3083-94 / BS512)).